The following is a 629-amino-acid chain: Filament-like plant protein 2 (629 aa).

Coiled-coil stretches lie at residues 34-61 and 102-171; these read WEKAENEVVELKQKLEDAADKNIVLEDR and NTGL…LEAE. The tract at residues 186 to 205 is disordered; the sequence is SSNQSVDSHSDGGRERVEGS. Residues 193–203 show a composition bias toward basic and acidic residues; sequence SHSDGGRERVE. Residues 270 to 493 are a coiled coil; the sequence is ELSLMEKLEK…IEEKTMIKRE (224 aa).

This sequence belongs to the FPP family. Interacts with WPP/MAF proteins. Binds to COG2; this interaction promotes the association between cortical microtubules and EXO70A1. In terms of tissue distribution, accumulates in preferentially xylem cells.

It is found in the vesicle. Its function is as follows. Ensures, when in complex with FPP3/VETH1 and COG2, the correct secondary cell wall (SCW) deposition pattern by recruiting exocyst components to cortical microtubules in xylem cells during secondary cell wall deposition by recruiting EXO70A1. The protein is Filament-like plant protein 2 of Arabidopsis thaliana (Mouse-ear cress).